The chain runs to 701 residues: Elongation factor G (701 aa).

Residues 8–291 (SRYRNIGIVA…AVIDYLPAPI (284 aa)) form the tr-type G domain. Residues 17–24 (AHVDAGKT), 89–93 (DTPGH), and 143–146 (NKMD) contribute to the GTP site.

This sequence belongs to the TRAFAC class translation factor GTPase superfamily. Classic translation factor GTPase family. EF-G/EF-2 subfamily.

It is found in the cytoplasm. In terms of biological role, catalyzes the GTP-dependent ribosomal translocation step during translation elongation. During this step, the ribosome changes from the pre-translocational (PRE) to the post-translocational (POST) state as the newly formed A-site-bound peptidyl-tRNA and P-site-bound deacylated tRNA move to the P and E sites, respectively. Catalyzes the coordinated movement of the two tRNA molecules, the mRNA and conformational changes in the ribosome. This Pseudomonas syringae pv. tomato (strain ATCC BAA-871 / DC3000) protein is Elongation factor G.